The sequence spans 215 residues: Vesicle-trafficking protein SEC22b (215 aa).

Over 1–190 the chain is Cytoplasmic; the sequence is MVLLTMIARV…RQDAKYLNMR (190 aa). Residues 6–119 form the Longin domain; it reads MIARVADGLP…YSFIEFDNYI (114 aa). The region spanning 134–194 is the v-SNARE coiled-coil homology domain; sequence NLSSVNTELQ…KYLNMRSTYA (61 aa). A helical transmembrane segment spans residues 191–213; it reads STYAKLAAVAVFSVMLIVYIRFW. The Lumenal segment spans residues 214–215; the sequence is WL.

It belongs to the synaptobrevin family. As to quaternary structure, component of 2 distinct SNARE complexes.

The protein localises to the endoplasmic reticulum membrane. It localises to the endoplasmic reticulum-Golgi intermediate compartment membrane. The protein resides in the golgi apparatus. Its subcellular location is the cis-Golgi network membrane. It is found in the trans-Golgi network membrane. The protein localises to the melanosome. Functionally, SNARE involved in targeting and fusion of ER-derived transport vesicles with the Golgi complex as well as Golgi-derived retrograde transport vesicles with the ER. In Xenopus tropicalis (Western clawed frog), this protein is Vesicle-trafficking protein SEC22b.